The sequence spans 727 residues: Cyclin-T1 (727 aa).

Ser117 bears the Phosphoserine mark. A Nuclear localization signal, and interaction with Tat-TAR RNA motif is present at residues 253 to 270 (KRIRNWRACQAAKKTKAD). A compositionally biased stretch (low complexity) spans 302–322 (MSTSSTTSTVPSLPTTEESSS). A disordered region spans residues 302-326 (MSTSSTTSTVPSLPTTEESSSNLSG). A Glycyl lysine isopeptide (Lys-Gly) (interchain with G-Cter in SUMO2) cross-link involves residue Lys343. Residues 386 to 427 (SAKVSLKEYRAKHAEELAAQKRQLENMEANVKSQYAYAAQNL) are a coiled coil. Phosphoserine is present on Ser390. Lys392 is modified (N6-acetyllysine). Lys417 participates in a covalent cross-link: Glycyl lysine isopeptide (Lys-Gly) (interchain with G-Cter in SUMO2). An ADP-ribosylserine mark is found at Ser418, Ser476, and Ser477. The histidine-rich domain (HRD) stretch occupies residues 482 to 552 (IKMRIKVHAA…RPGDPKHSSQ (71 aa)). Residue Lys483 forms a Glycyl lysine isopeptide (Lys-Gly) (interchain with G-Cter in SUMO2) linkage. Residues 486–508 (IKVHAAPDKHNSIDDSVTKSREH) are compositionally biased toward basic and acidic residues. 2 disordered regions span residues 486-591 (IKVH…DHPA) and 692-727 (LNPR…PLPK). Residue Lys487 is modified to N6-(ADP-ribosyl)lysine. His489 is modified (ADP-ribosylhistidine). A phosphoserine mark is found at Ser497 and Ser501. A compositionally biased stretch (basic residues) spans 509 to 532 (KEKHKTHPSNHHHHHNHHSHKHSH). At His532 the chain carries ADP-ribosylhistidine. ADP-ribosylserine is present on residues Ser533, Ser551, and Ser554. Position 558 is an ADP-ribosylhistidine (His558). Residues 562–572 (SLSSSFSSSSS) are compositionally biased toward low complexity. Ser565 carries the ADP-ribosylserine modification. Ser566 bears the Phosphoserine mark. Positions 711-727 (LPPLPSEPPPPLPPLPK) are enriched in pro residues.

Belongs to the cyclin family. Cyclin C subfamily. As to quaternary structure, cyclin-T1 is the predominant cyclin that associates with CDK9 to form a heterodimer called P-TEFb. P-TEFb forms a complex with AFF4/AF5Q31. Component of a complex which is at least composed of HTATSF1/Tat-SF1, P-TEFb complex, RNA pol II, SUPT5H, and NCL/nucleolin. Component of the 7SK snRNP complex at least composed of P-TEFb (composed of CDK9 and CCNT1/cyclin-T1), HEXIM1, HEXIM2, BCDIN3, SART3 proteins and 7SK and U6 snRNAs. Interacts (via central region) with ZMYND8 (via N-terminus); the interaction is direct and the association appears to occur between homodimeric ZMYND8 and the activated form of the P-TEFb complex. Interacts with BRD4, targets chromatin binding. Interacts with JMJD6. Interacts with MDFIC. Interacts with HSF1. Interacts with HTATSF1. Interacts with TBX21. In terms of processing, ADP-ribosylation on serine residues by PARP1 in response to DNA damage disrupts the phase separation activity of CCNT1, thereby preventing activation of CDK9.

The protein resides in the nucleus. Regulatory subunit of the cyclin-dependent kinase pair (CDK9/cyclin-T1) complex, also called positive transcription elongation factor B (P-TEFb), which facilitates the transition from abortive to productive elongation by phosphorylating the CTD (C-terminal domain) of the large subunit of RNA polymerase II (RNA Pol II). Required to activate the protein kinase activity of CDK9: acts by mediating formation of liquid-liquid phase separation (LLPS) that enhances binding of P-TEFb to the CTD of RNA Pol II. This is Cyclin-T1 (CCNT1) from Equus caballus (Horse).